Reading from the N-terminus, the 262-residue chain is Tryptophan synthase alpha chain (262 aa).

Catalysis depends on proton acceptor residues glutamate 52 and aspartate 63.

The protein belongs to the TrpA family. In terms of assembly, tetramer of two alpha and two beta chains.

It catalyses the reaction (1S,2R)-1-C-(indol-3-yl)glycerol 3-phosphate + L-serine = D-glyceraldehyde 3-phosphate + L-tryptophan + H2O. Its pathway is amino-acid biosynthesis; L-tryptophan biosynthesis; L-tryptophan from chorismate: step 5/5. The alpha subunit is responsible for the aldol cleavage of indoleglycerol phosphate to indole and glyceraldehyde 3-phosphate. This is Tryptophan synthase alpha chain from Mycobacteroides abscessus (strain ATCC 19977 / DSM 44196 / CCUG 20993 / CIP 104536 / JCM 13569 / NCTC 13031 / TMC 1543 / L948) (Mycobacterium abscessus).